The sequence spans 565 residues: MADYSGESGLLSCESCDMVFRSWALLATHTKRFCIGRLTPEVTLKSQPSVAIKRGTKIMAQEKSRDQEASTSALKRLTEETAGSPGERLRVLQGTRARRMAETEAQSRALERRGEELKRRLHSVAGPKGGLPRPFDLERELRELKEEANRTRGALQTLGAHFQALQLQPRKLQDTHRAVEFCYLPLRFNPETLAAEIRILREAYVHGGGRDPEVLDKILQLQVEASALELQRSQNRKEKLSAASEEVLTVEAENRLLEAEILALQKQKVLSLSPWGSRDLPGHLSRCDNSLLPPLVAPPIPQLTSSTKAQNFHGTSKTILNGTMTRKMGLDLHFLLPASDVLGPAPYDPGAGLVIFYDFLRGLDTSWIWVQLMTSLARNGQDTGGTTALPPALCLPQPSAPGPMGNCAILASKQPVPRLPPSPLVSLICELQAWHGVTWAPQPKAWASLLLFDQDLRVLRGRWRLPLRVYPNTSLSLAQRNEIPQAGQAELFLRLVNARDTDAQTLAEINPANAHEYQYPPMVSSSSVESSFFTHSSAFADPPPPTEEAFVSVKDKNEHLSPHQF.

Positions 58–87 (IMAQEKSRDQEASTSALKRLTEETAGSPGE) are disordered. Coiled coils occupy residues 97 to 160 (ARRM…TLGA) and 219 to 271 (LQLQ…KVLS).

The polypeptide is Coiled-coil domain-containing protein 17 (Ccdc17) (Mus musculus (Mouse)).